The sequence spans 457 residues: Bifunctional protein GlmU (457 aa).

Positions 1–227 are pyrophosphorylase; that stretch reads MTQLSVVILA…FMEVEGANNR (227 aa). UDP-N-acetyl-alpha-D-glucosamine is bound by residues 9–12, lysine 23, glutamine 74, 79–80, 101–103, glycine 138, glutamate 152, asparagine 167, and asparagine 225; these read LAAG, GT, and YGD. Position 103 (aspartate 103) interacts with Mg(2+). Asparagine 225 contributes to the Mg(2+) binding site. Residues 228–248 form a linker region; it reads LQLAALERFYQKTQAEKLLLA. Positions 249 to 457 are N-acetyltransferase; sequence GVRLIDPARF…QRPTKKKIAD (209 aa). UDP-N-acetyl-alpha-D-glucosamine contacts are provided by arginine 331 and lysine 349. Histidine 361 serves as the catalytic Proton acceptor. 2 residues coordinate UDP-N-acetyl-alpha-D-glucosamine: tyrosine 364 and asparagine 375. Acetyl-CoA is bound by residues alanine 378, 384–385, serine 403, alanine 421, and arginine 438; that span reads NY.

It in the N-terminal section; belongs to the N-acetylglucosamine-1-phosphate uridyltransferase family. This sequence in the C-terminal section; belongs to the transferase hexapeptide repeat family. Homotrimer. It depends on Mg(2+) as a cofactor.

The protein localises to the cytoplasm. The catalysed reaction is alpha-D-glucosamine 1-phosphate + acetyl-CoA = N-acetyl-alpha-D-glucosamine 1-phosphate + CoA + H(+). The enzyme catalyses N-acetyl-alpha-D-glucosamine 1-phosphate + UTP + H(+) = UDP-N-acetyl-alpha-D-glucosamine + diphosphate. Its pathway is nucleotide-sugar biosynthesis; UDP-N-acetyl-alpha-D-glucosamine biosynthesis; N-acetyl-alpha-D-glucosamine 1-phosphate from alpha-D-glucosamine 6-phosphate (route II): step 2/2. The protein operates within nucleotide-sugar biosynthesis; UDP-N-acetyl-alpha-D-glucosamine biosynthesis; UDP-N-acetyl-alpha-D-glucosamine from N-acetyl-alpha-D-glucosamine 1-phosphate: step 1/1. It participates in bacterial outer membrane biogenesis; LPS lipid A biosynthesis. Functionally, catalyzes the last two sequential reactions in the de novo biosynthetic pathway for UDP-N-acetylglucosamine (UDP-GlcNAc). The C-terminal domain catalyzes the transfer of acetyl group from acetyl coenzyme A to glucosamine-1-phosphate (GlcN-1-P) to produce N-acetylglucosamine-1-phosphate (GlcNAc-1-P), which is converted into UDP-GlcNAc by the transfer of uridine 5-monophosphate (from uridine 5-triphosphate), a reaction catalyzed by the N-terminal domain. In Actinobacillus pleuropneumoniae serotype 5b (strain L20), this protein is Bifunctional protein GlmU.